Consider the following 386-residue polypeptide: Succinate--CoA ligase [ADP-forming] subunit beta (386 aa).

Residues 9–237 (KEVLRDFGVN…LSAEHPLEVE (229 aa)) form the ATP-grasp domain. ATP contacts are provided by residues Lys-45, 52 to 54 (GRG), Val-94, and Glu-101. Mg(2+)-binding residues include Asn-192 and Asp-206. Substrate is bound by residues Asn-258 and 315–317 (GIT).

It belongs to the succinate/malate CoA ligase beta subunit family. Heterotetramer of two alpha and two beta subunits. Requires Mg(2+) as cofactor.

The catalysed reaction is succinate + ATP + CoA = succinyl-CoA + ADP + phosphate. The enzyme catalyses GTP + succinate + CoA = succinyl-CoA + GDP + phosphate. The protein operates within carbohydrate metabolism; tricarboxylic acid cycle; succinate from succinyl-CoA (ligase route): step 1/1. Succinyl-CoA synthetase functions in the citric acid cycle (TCA), coupling the hydrolysis of succinyl-CoA to the synthesis of either ATP or GTP and thus represents the only step of substrate-level phosphorylation in the TCA. The beta subunit provides nucleotide specificity of the enzyme and binds the substrate succinate, while the binding sites for coenzyme A and phosphate are found in the alpha subunit. The protein is Succinate--CoA ligase [ADP-forming] subunit beta of Deinococcus radiodurans (strain ATCC 13939 / DSM 20539 / JCM 16871 / CCUG 27074 / LMG 4051 / NBRC 15346 / NCIMB 9279 / VKM B-1422 / R1).